A 285-amino-acid chain; its full sequence is MFKDFFNRTKKKKYLTVQDSKNNDVPAGIMTKCPKCKKIMYTKELAENLNVCFNCDHHIALTAYKRIEAISDEGSFTEFDKGMTSANPLDFPSYLEKIEKDQQKTGLKEAVVTGTAQLDGMKFGVAVMDSRFRMGSMGSVIGEKICRIIDYCTENRLPFILFSASGGARMQEGIISLMQMGKTSVSLKRHSDAGLLYISYLTHPTTGGVSASFASVGDINLSEPKALIGFAGRRVIEQTINEKLPDDFQTAEFLLEHGQLDKVVHRNNMRQTLSEILKIHQEVTK.

A CoA carboxyltransferase N-terminal domain is found at 29-285 (IMTKCPKCKK…ILKIHQEVTK (257 aa)). Zn(2+)-binding residues include Cys-33, Cys-36, Cys-52, and Cys-55. Residues 33–55 (CPKCKKIMYTKELAENLNVCFNC) form a C4-type zinc finger.

The protein belongs to the AccD/PCCB family. In terms of assembly, acetyl-CoA carboxylase is a heterohexamer composed of biotin carboxyl carrier protein (AccB), biotin carboxylase (AccC) and two subunits each of ACCase subunit alpha (AccA) and ACCase subunit beta (AccD). Requires Zn(2+) as cofactor.

It localises to the cytoplasm. It catalyses the reaction N(6)-carboxybiotinyl-L-lysyl-[protein] + acetyl-CoA = N(6)-biotinyl-L-lysyl-[protein] + malonyl-CoA. Its pathway is lipid metabolism; malonyl-CoA biosynthesis; malonyl-CoA from acetyl-CoA: step 1/1. Component of the acetyl coenzyme A carboxylase (ACC) complex. Biotin carboxylase (BC) catalyzes the carboxylation of biotin on its carrier protein (BCCP) and then the CO(2) group is transferred by the transcarboxylase to acetyl-CoA to form malonyl-CoA. The protein is Acetyl-coenzyme A carboxylase carboxyl transferase subunit beta of Staphylococcus aureus (strain MSSA476).